The sequence spans 310 residues: tRNA pseudouridine synthase B (310 aa).

Catalysis depends on Asp47, which acts as the Nucleophile.

This sequence belongs to the pseudouridine synthase TruB family. Type 1 subfamily.

It carries out the reaction uridine(55) in tRNA = pseudouridine(55) in tRNA. Its function is as follows. Responsible for synthesis of pseudouridine from uracil-55 in the psi GC loop of transfer RNAs. This is tRNA pseudouridine synthase B from Psychromonas ingrahamii (strain DSM 17664 / CCUG 51855 / 37).